A 151-amino-acid chain; its full sequence is HTH-type transcriptional regulator TcaR (151 aa).

In terms of domain architecture, HTH marR-type spans methionine 1 to histidine 142. The segment at residues isoleucine 54 to aspartate 77 is a DNA-binding region (H-T-H motif).

Involved in the antibiotic teicoplanin susceptibility. Inactivation of the tcaRAB operon leads to teicoplanin resistance. In terms of biological role, is a weak negative regulator of transcription of the icaABD operon. This Staphylococcus aureus (strain COL) protein is HTH-type transcriptional regulator TcaR (tcaR).